The sequence spans 556 residues: Glucose-6-phosphate isomerase (556 aa).

Glutamate 364 serves as the catalytic Proton donor. Residues histidine 395 and lysine 521 contribute to the active site.

This sequence belongs to the GPI family.

Its subcellular location is the cytoplasm. It catalyses the reaction alpha-D-glucose 6-phosphate = beta-D-fructose 6-phosphate. The protein operates within carbohydrate biosynthesis; gluconeogenesis. Its pathway is carbohydrate degradation; glycolysis; D-glyceraldehyde 3-phosphate and glycerone phosphate from D-glucose: step 2/4. Functionally, catalyzes the reversible isomerization of glucose-6-phosphate to fructose-6-phosphate. In Corynebacterium kroppenstedtii (strain DSM 44385 / JCM 11950 / CIP 105744 / CCUG 35717), this protein is Glucose-6-phosphate isomerase.